Consider the following 229-residue polypeptide: ATP synthase subunit a (229 aa).

The next 7 membrane-spanning stretches (helical) occupy residues 25–45, 58–75, 81–101, 110–130, 141–161, 175–195, and 196–216; these read VHII…VLGA, FLEV…SVTG, FFPL…IGLV, SINT…FIGI, FLGP…IGHL, MMGH…FFAP, and LPIM…FFLL.

Belongs to the ATPase A chain family. As to quaternary structure, F-type ATPases have 2 components, CF(1) - the catalytic core - and CF(0) - the membrane proton channel. CF(1) has five subunits: alpha(3), beta(3), gamma(1), delta(1), epsilon(1). CF(0) has three main subunits: a(1), b(2) and c(9-12). The alpha and beta chains form an alternating ring which encloses part of the gamma chain. CF(1) is attached to CF(0) by a central stalk formed by the gamma and epsilon chains, while a peripheral stalk is formed by the delta and b chains.

The protein localises to the cell inner membrane. In terms of biological role, key component of the proton channel; it plays a direct role in the translocation of protons across the membrane. This chain is ATP synthase subunit a, found in Desulfosudis oleivorans (strain DSM 6200 / JCM 39069 / Hxd3) (Desulfococcus oleovorans).